The sequence spans 386 residues: Adiponectin receptor protein 2 (386 aa).

The disordered stretch occupies residues 1-71 (MNEPTENRLG…HEYSDEAPQE (71 aa)). The Cytoplasmic portion of the chain corresponds to 1 to 147 (MNEPTENRLG…SIFRIHTETG (147 aa)). The segment covering 15–41 (PEPDIRLRKGHQLDGTRRGDNDSHQGD) has biased composition (basic and acidic residues). A helical transmembrane segment spans residues 148–168 (NIWTHLLGCVFFLCLGIFYMF). Over 169 to 181 (RPNISFVAPLQEK) the chain is Extracellular. The chain crosses the membrane as a helical span at residues 182-202 (VVFGLFFLGAILCLSFSWLFH). Histidine 202 is a binding site for Zn(2+). The Cytoplasmic portion of the chain corresponds to 203–213 (TVYCHSEGVSR). The helical transmembrane segment at 214-234 (LFSKLDYSGIALLIMGSFVPW) threads the bilayer. Topologically, residues 235 to 245 (LYYSFYCNPQP) are extracellular. A helical transmembrane segment spans residues 246–266 (CFIYLIVICVLGIAAIIVSQW). Over 267–273 (DMFATPQ) the chain is Cytoplasmic. A helical membrane pass occupies residues 274 to 294 (YRGVRAGVFLGLGLSGIIPTL). At 295–309 (HYVISEGFLKAATIG) the chain is on the extracellular side. The chain crosses the membrane as a helical span at residues 310–330 (QIGWLMLMASLYITGAALYAA). Residues 331–348 (RIPERFFPGKCDIWFHSH) are Cytoplasmic-facing. Zn(2+) is bound by residues histidine 348 and histidine 352. The chain crosses the membrane as a helical span at residues 349–369 (QLFHIFVVAGAFVHFHGVSNL). The Extracellular portion of the chain corresponds to 370–386 (QEFRFMIGGGCSEEDAL).

Belongs to the ADIPOR family. As to quaternary structure, may form homooligomers and heterooligomers with ADIPOR1. Interacts with APPL2 (via BAR domain); ADIPOQ dissociates this interaction. In terms of tissue distribution, ubiquitous. Highly expressed in skeletal muscle, liver and placenta. Weakly expressed in brain, heart, colon, spleen, kidney, thymus, small intestine, peripheral blood leukocytes and lung.

Its subcellular location is the cell membrane. In terms of biological role, receptor for ADIPOQ, an essential hormone secreted by adipocytes that regulates glucose and lipid metabolism. Required for normal body fat and glucose homeostasis. ADIPOQ-binding activates a signaling cascade that leads to increased PPARA activity, and ultimately to increased fatty acid oxidation and glucose uptake. Has intermediate affinity for globular and full-length adiponectin. Required for normal revascularization after chronic ischemia caused by severing of blood vessels. In Homo sapiens (Human), this protein is Adiponectin receptor protein 2.